A 193-amino-acid chain; its full sequence is Potassium-transporting ATPase KdpC subunit (193 aa).

A helical membrane pass occupies residues 14–34; it reads ITFTFLVLCGLVYPLIVTGIA.

The protein belongs to the KdpC family. As to quaternary structure, the system is composed of three essential subunits: KdpA, KdpB and KdpC.

The protein resides in the cell membrane. Its function is as follows. Part of the high-affinity ATP-driven potassium transport (or Kdp) system, which catalyzes the hydrolysis of ATP coupled with the electrogenic transport of potassium into the cytoplasm. This subunit acts as a catalytic chaperone that increases the ATP-binding affinity of the ATP-hydrolyzing subunit KdpB by the formation of a transient KdpB/KdpC/ATP ternary complex. In Bacillus cereus (strain ATCC 14579 / DSM 31 / CCUG 7414 / JCM 2152 / NBRC 15305 / NCIMB 9373 / NCTC 2599 / NRRL B-3711), this protein is Potassium-transporting ATPase KdpC subunit.